Consider the following 258-residue polypeptide: Snake venom serine protease 1 (258 aa).

Residues 1–18 (MVLIRVLANLLILQLSYA) form the signal peptide. Residues 19-24 (QKSSEL) constitute a propeptide that is removed on maturation. The 225-residue stretch at 25–249 (VVGGDECNIN…YNDWIKSIIA (225 aa)) folds into the Peptidase S1 domain. Intrachain disulfides connect Cys-31-Cys-163, Cys-50-Cys-66, Cys-98-Cys-256, Cys-142-Cys-210, Cys-174-Cys-189, and Cys-200-Cys-225. Asn-44 is a glycosylation site (N-linked (GlcNAc...) asparagine). Residues His-65 and Asp-110 each act as charge relay system in the active site. Catalysis depends on Ser-204, which acts as the Charge relay system.

It belongs to the peptidase S1 family. Snake venom subfamily. As to quaternary structure, monomer. In terms of tissue distribution, expressed by the venom gland.

The protein resides in the secreted. Functionally, snake venom serine protease that may act in the hemostasis system of the prey. In Craspedocephalus gramineus (Bamboo pit viper), this protein is Snake venom serine protease 1 (TLG1).